A 307-amino-acid chain; its full sequence is MKSYELITILGPTASGKTTFAAALAAQLDTEIISADSRQIYRSMDIGTGKDLADYNVNGKQIPYHLIDICEPGYKYNVFEYQHDFFRVYEDMKRRGKLPILCGGTGMYIEAVLKGYKLLDVPQNPELRESLRNKTLEELETILASYKILHNKTDVDTAQRAIRAIEIEEYYKTQAPDVNEYNPINSLIIGIHIDRELRREKISRRLRTRLDEGMVDEVRTILATGVKPEDLIYYGLEYKFLTLYIIGELSFEEMVSQLEIAIHQFAKRQMTWFRGMERRGCEIHWIDATLPTEEKIATTMRILNNQL.

Position 11–18 (11–18) interacts with ATP; it reads GPTASGKT. 13-18 lines the substrate pocket; it reads TASGKT. Interaction with substrate tRNA stretches follow at residues 36–39 and 159–163; these read DSRQ and QRAIR.

This sequence belongs to the IPP transferase family. As to quaternary structure, monomer. Requires Mg(2+) as cofactor.

It carries out the reaction adenosine(37) in tRNA + dimethylallyl diphosphate = N(6)-dimethylallyladenosine(37) in tRNA + diphosphate. Its function is as follows. Catalyzes the transfer of a dimethylallyl group onto the adenine at position 37 in tRNAs that read codons beginning with uridine, leading to the formation of N6-(dimethylallyl)adenosine (i(6)A). The polypeptide is tRNA dimethylallyltransferase 1 (Parabacteroides distasonis (strain ATCC 8503 / DSM 20701 / CIP 104284 / JCM 5825 / NCTC 11152)).